The following is a 419-amino-acid chain: L-rhamnose isomerase (419 aa).

The Mn(2+) site is built by histidine 262, aspartate 294, and aspartate 296.

Belongs to the rhamnose isomerase family. As to quaternary structure, homotetramer. Mn(2+) is required as a cofactor.

The protein resides in the cytoplasm. The enzyme catalyses L-rhamnopyranose = L-rhamnulose. It participates in carbohydrate degradation; L-rhamnose degradation; glycerone phosphate from L-rhamnose: step 1/3. Functionally, catalyzes the interconversion of L-rhamnose and L-rhamnulose. In Escherichia coli O45:K1 (strain S88 / ExPEC), this protein is L-rhamnose isomerase.